Reading from the N-terminus, the 875-residue chain is DNA mismatch repair protein MutS (875 aa).

625–632 serves as a coordination point for ATP; that stretch reads GPNMGGKS.

The protein belongs to the DNA mismatch repair MutS family.

Its function is as follows. This protein is involved in the repair of mismatches in DNA. It is possible that it carries out the mismatch recognition step. This protein has a weak ATPase activity. This chain is DNA mismatch repair protein MutS, found in Symbiobacterium thermophilum (strain DSM 24528 / JCM 14929 / IAM 14863 / T).